The sequence spans 148 residues: Putative transmembrane protein ORF23 (148 aa).

A signal peptide spans 1 to 18; it reads MVIILLGVSIVVPGLFLA. At 19–118 the chain is on the extracellular side; it reads TETPQTNTFE…YVGWPSGAET (100 aa). The helical transmembrane segment at 119–139 threads the bilayer; that stretch reads IITNIADIIIMATAVMIIGAI. Residues 140–148 are Cytoplasmic-facing; sequence YTGYKVSIK.

Its subcellular location is the host membrane. The chain is Putative transmembrane protein ORF23 from His1 virus (isolate Australia/Victoria) (His1V).